Reading from the N-terminus, the 310-residue chain is p-hydroxybenzoic acid efflux pump subunit AaeA (310 aa).

A helical transmembrane segment spans residues 12-32 (AITVILVILAFVAIFRAWVYY).

The protein belongs to the membrane fusion protein (MFP) (TC 8.A.1) family.

It is found in the cell inner membrane. Functionally, forms an efflux pump with AaeB. The polypeptide is p-hydroxybenzoic acid efflux pump subunit AaeA (Klebsiella pneumoniae (strain 342)).